Here is a 481-residue protein sequence, read N- to C-terminus: FBD-associated F-box protein At5g44490 (481 aa).

One can recognise an F-box domain in the interval 17 to 64 (DLMSKLTDALISQVLFYLPTKEAVSTSVLSSRWKSVWLLIPDLDLNSS). In terms of domain architecture, FBD spans 370–423 (EKSVSFSSVPQCLLSSLEFVEIKISRFGIISLGIGIARFFVENSVVLKKLVVHS).

The sequence is that of FBD-associated F-box protein At5g44490 from Arabidopsis thaliana (Mouse-ear cress).